The primary structure comprises 233 residues: DNA repair protein RecO (233 aa).

Belongs to the RecO family.

Functionally, involved in DNA repair and RecF pathway recombination. In Pseudomonas aeruginosa (strain LESB58), this protein is DNA repair protein RecO.